Reading from the N-terminus, the 247-residue chain is ATP synthase subunit a, chloroplastic (247 aa).

5 consecutive transmembrane segments (helical) span residues 38–58, 95–115, 134–154, 199–219, and 220–240; these read QVLI…SIAV, VPFI…GALL, INTT…AGLT, LVVV…VMFL, and GLFT…AYIG.

The protein belongs to the ATPase A chain family. In terms of assembly, F-type ATPases have 2 components, CF(1) - the catalytic core - and CF(0) - the membrane proton channel. CF(1) has five subunits: alpha(3), beta(3), gamma(1), delta(1), epsilon(1). CF(0) has four main subunits: a, b, b' and c.

The protein resides in the plastid. It is found in the chloroplast thylakoid membrane. Its function is as follows. Key component of the proton channel; it plays a direct role in the translocation of protons across the membrane. The chain is ATP synthase subunit a, chloroplastic from Eucalyptus globulus subsp. globulus (Tasmanian blue gum).